A 429-amino-acid polypeptide reads, in one-letter code: Phosphomethylpyrimidine synthase 1 (429 aa).

Substrate contacts are provided by residues Asn65, Met94, Tyr123, His162, 184-186 (SRG), 225-228 (DGLR), and Glu264. His268 lines the Zn(2+) pocket. Tyr291 is a substrate binding site. His332 contacts Zn(2+). [4Fe-4S] cluster is bound by residues Cys408, Cys411, and Cys415.

It belongs to the ThiC family. [4Fe-4S] cluster serves as cofactor.

The enzyme catalyses 5-amino-1-(5-phospho-beta-D-ribosyl)imidazole + S-adenosyl-L-methionine = 4-amino-2-methyl-5-(phosphooxymethyl)pyrimidine + CO + 5'-deoxyadenosine + formate + L-methionine + 3 H(+). The protein operates within cofactor biosynthesis; thiamine diphosphate biosynthesis. Its function is as follows. Catalyzes the synthesis of the hydroxymethylpyrimidine phosphate (HMP-P) moiety of thiamine from aminoimidazole ribotide (AIR) in a radical S-adenosyl-L-methionine (SAM)-dependent reaction. This is Phosphomethylpyrimidine synthase 1 from Methanosphaera stadtmanae (strain ATCC 43021 / DSM 3091 / JCM 11832 / MCB-3).